We begin with the raw amino-acid sequence, 177 residues long: ATP synthase subunit delta (177 aa).

This sequence belongs to the ATPase delta chain family. In terms of assembly, F-type ATPases have 2 components, F(1) - the catalytic core - and F(0) - the membrane proton channel. F(1) has five subunits: alpha(3), beta(3), gamma(1), delta(1), epsilon(1). F(0) has three main subunits: a(1), b(2) and c(10-14). The alpha and beta chains form an alternating ring which encloses part of the gamma chain. F(1) is attached to F(0) by a central stalk formed by the gamma and epsilon chains, while a peripheral stalk is formed by the delta and b chains.

The protein resides in the cell inner membrane. Functionally, f(1)F(0) ATP synthase produces ATP from ADP in the presence of a proton or sodium gradient. F-type ATPases consist of two structural domains, F(1) containing the extramembraneous catalytic core and F(0) containing the membrane proton channel, linked together by a central stalk and a peripheral stalk. During catalysis, ATP synthesis in the catalytic domain of F(1) is coupled via a rotary mechanism of the central stalk subunits to proton translocation. This protein is part of the stalk that links CF(0) to CF(1). It either transmits conformational changes from CF(0) to CF(1) or is implicated in proton conduction. This is ATP synthase subunit delta from Aeromonas hydrophila subsp. hydrophila (strain ATCC 7966 / DSM 30187 / BCRC 13018 / CCUG 14551 / JCM 1027 / KCTC 2358 / NCIMB 9240 / NCTC 8049).